The following is a 97-amino-acid chain: F-actin-capping protein subunit beta (97 aa).

Disordered stretches follow at residues 1–27 (RLPPQQIEKSPWSNKYDPPLEDGAMPS) and 43–66 (KSGSGTMNLGGSLTRQMEKDETVS). Positions 43–57 (KSGSGTMNLGGSLTR) are enriched in polar residues. Lys97 is subject to N6-acetyllysine.

This sequence belongs to the F-actin-capping protein beta subunit family. In terms of assembly, component of the F-actin capping complex, composed of a heterodimer of an alpha and a beta subunit. Subunit of dynactin, a multiprotein complex part of a tripartite complex with dynein and a adapter, such as BICDL1, BICD2 or HOOK3. The dynactin complex is built around ACTR1A/ACTB filament and consists of an actin-related filament composed of a shoulder domain, a pointed end and a barbed end. Its length is defined by its flexible shoulder domain. The soulder is composed of 2 DCTN1 subunits, 4 DCTN2 and 2 DCTN3. The 4 DCNT2 (via N-terminus) bind the ACTR1A filament and act as molecular rulers to determine the length. The pointed end is important for binding dynein-dynactin cargo adapters. Consists of 4 subunits: ACTR10, DCNT4, DCTN5 and DCTN6. The barbed end is composed of a CAPZA1:CAPZB heterodimers, which binds ACTR1A/ACTB filament and dynactin and stabilizes dynactin. Interacts with ARHGAP17. Interaction with RCSD1/CAPZIP. Component of the WASH complex, composed of F-actin-capping protein subunit alpha (CAPZA1, CAPZA2 or CAPZA3), F-actin-capping protein subunit beta (CAPZB), WASH (WASHC1, WASH2P, WASH3P, WASH4P, WASH5P or WASH6P), WASHC2 (WASHC2A or WASHC2C), WASHC3, WASHC4 and WASHC5. Interacts with ACTG1. Directly interacts with CRACD; this interaction decreases binding to actin.

It is found in the cytoplasm. The protein localises to the cytoskeleton. The protein resides in the myofibril. Its subcellular location is the sarcomere. In terms of biological role, F-actin-capping proteins bind in a Ca(2+)-independent manner to the fast growing ends of actin filaments (barbed end) thereby blocking the exchange of subunits at these ends. Unlike other capping proteins (such as gelsolin and severin), these proteins do not sever actin filaments. Plays a role in the regulation of cell morphology and cytoskeletal organization. Forms, with CAPZB, the barbed end of the fast growing ends of actin filaments in the dynactin complex and stabilizes dynactin structure. The dynactin multiprotein complex activates the molecular motor dynein for ultra-processive transport along microtubules. The sequence is that of F-actin-capping protein subunit beta from Mesocricetus auratus (Golden hamster).